Here is a 271-residue protein sequence, read N- to C-terminus: Endonuclease V (271 aa).

The interval 46–67 (TRTGDAPDVDQTTLSTSADDRT) is disordered. Asp76 and Asp140 together coordinate Mg(2+).

It belongs to the endonuclease V family. The cofactor is Mg(2+).

The protein localises to the cytoplasm. The enzyme catalyses Endonucleolytic cleavage at apurinic or apyrimidinic sites to products with a 5'-phosphate.. Its function is as follows. DNA repair enzyme involved in the repair of deaminated bases. Selectively cleaves double-stranded DNA at the second phosphodiester bond 3' to a deoxyinosine leaving behind the intact lesion on the nicked DNA. This is Endonuclease V from Haloarcula marismortui (strain ATCC 43049 / DSM 3752 / JCM 8966 / VKM B-1809) (Halobacterium marismortui).